The chain runs to 316 residues: Methionyl-tRNA formyltransferase (316 aa).

112-115 (SLLP) is a binding site for (6S)-5,6,7,8-tetrahydrofolate.

This sequence belongs to the Fmt family.

The enzyme catalyses L-methionyl-tRNA(fMet) + (6R)-10-formyltetrahydrofolate = N-formyl-L-methionyl-tRNA(fMet) + (6S)-5,6,7,8-tetrahydrofolate + H(+). Its function is as follows. Attaches a formyl group to the free amino group of methionyl-tRNA(fMet). The formyl group appears to play a dual role in the initiator identity of N-formylmethionyl-tRNA by promoting its recognition by IF2 and preventing the misappropriation of this tRNA by the elongation apparatus. The sequence is that of Methionyl-tRNA formyltransferase from Glaesserella parasuis serovar 5 (strain SH0165) (Haemophilus parasuis).